Here is a 204-residue protein sequence, read N- to C-terminus: Recombination protein RecR (204 aa).

The C4-type zinc-finger motif lies at 57-72 (CPTCFNYTDTDICRYC). The region spanning 80-181 (ESICVVEEPS…KLSRIAHGVP (102 aa)) is the Toprim domain.

It belongs to the RecR family.

Its function is as follows. May play a role in DNA repair. It seems to be involved in an RecBC-independent recombinational process of DNA repair. It may act with RecF and RecO. This chain is Recombination protein RecR, found in Bdellovibrio bacteriovorus (strain ATCC 15356 / DSM 50701 / NCIMB 9529 / HD100).